Here is a 730-residue protein sequence, read N- to C-terminus: Probable palmitoyltransferase AKR2 (730 aa).

ANK repeat units lie at residues 32-62 (FVVE…DINK), 66-95 (DELP…NVNQ), 100-129 (ERAT…NPTL), 133-166 (QGLN…NVDI), 172-201 (NNRT…TVAL), and 205-234 (RGFN…NFYE). Helical transmembrane passes span 283 to 303 (LMIF…SLIL), 309 to 328 (IALS…KFVL), 344 to 364 (TPFF…IWVK), and 376 to 396 (AKDA…LKLV). The DHHC domain maps to 429 to 479 (NFCVETLERKPLRSKYSLFSGALVARFNHYCPWVYNDIGLKNHKLFMFFAF). Cys459 functions as the S-palmitoyl cysteine intermediate in the catalytic mechanism. 2 helical membrane passes run 473-493 (LFMF…WLCL) and 530-550 (TFFL…MLIV).

The protein belongs to the DHHC palmitoyltransferase family. AKR/ZDHHC17 subfamily.

It is found in the membrane. It carries out the reaction L-cysteinyl-[protein] + hexadecanoyl-CoA = S-hexadecanoyl-L-cysteinyl-[protein] + CoA. The protein is Probable palmitoyltransferase AKR2 (AKR2) of Saccharomyces uvarum (strain ATCC 76518 / CBS 7001 / CLIB 283 / NBRC 10550 / MCYC 623 / NCYC 2669 / NRRL Y-11845) (Yeast).